The chain runs to 400 residues: 3-phenylpropionate/cinnamic acid dioxygenase ferredoxin--NAD(+) reductase component (400 aa).

Position 5–36 (5–36) interacts with FAD; that stretch reads TIIIVGGGQAAAMAAASLRQQGFTGELHLFSD. 146–174 lines the NAD(+) pocket; the sequence is SVVIVGAGTIGLELAASATQRGCKVTVIE.

The protein belongs to the bacterial ring-hydroxylating dioxygenase ferredoxin reductase family. In terms of assembly, this dioxygenase system consists of four proteins: the two subunits of the hydroxylase component (HcaE and HcaF), a ferredoxin (HcaC) and a ferredoxin reductase (HcaD). FAD is required as a cofactor.

It carries out the reaction 2 reduced [2Fe-2S]-[ferredoxin] + NAD(+) + H(+) = 2 oxidized [2Fe-2S]-[ferredoxin] + NADH. It participates in aromatic compound metabolism; 3-phenylpropanoate degradation. In terms of biological role, part of the multicomponent 3-phenylpropionate dioxygenase, that converts 3-phenylpropionic acid (PP) and cinnamic acid (CI) into 3-phenylpropionate-dihydrodiol (PP-dihydrodiol) and cinnamic acid-dihydrodiol (CI-dihydrodiol), respectively. This Escherichia coli O17:K52:H18 (strain UMN026 / ExPEC) protein is 3-phenylpropionate/cinnamic acid dioxygenase ferredoxin--NAD(+) reductase component.